The chain runs to 360 residues: Photosystem II protein D1 (360 aa).

The next 3 helical transmembrane spans lie at 29–46, 118–133, and 142–156; these read YIGW…TATC, HFLI…EWEL, and WICV…AATA. His118 is a chlorophyll a binding site. Position 126 (Tyr126) interacts with pheophytin a. 2 residues coordinate [CaMn4O5] cluster: Asp170 and Glu189. The chain crosses the membrane as a helical span at residues 197–218; it reads FHMAGVAGVFGGALFSAMHGSL. His198 provides a ligand contact to chlorophyll a. A quinone contacts are provided by residues His215 and 264–265; that span reads SF. His215 lines the Fe cation pocket. His272 serves as a coordination point for Fe cation. The helical transmembrane segment at 274 to 288 threads the bilayer; sequence FLGAWPVVGIWLTAI. Residues His332, Glu333, Asp342, and Ala344 each coordinate [CaMn4O5] cluster. The propeptide occupies 345–360; the sequence is SNSVVPVALTAPSVEA.

Belongs to the reaction center PufL/M/PsbA/D family. PSII is composed of 1 copy each of membrane proteins PsbA, PsbB, PsbC, PsbD, PsbE, PsbF, PsbH, PsbI, PsbJ, PsbK, PsbL, PsbM, PsbT, PsbX, PsbY, PsbZ, Psb30/Ycf12, at least 3 peripheral proteins of the oxygen-evolving complex and a large number of cofactors. It forms dimeric complexes. The D1/D2 heterodimer binds P680, chlorophylls that are the primary electron donor of PSII, and subsequent electron acceptors. It shares a non-heme iron and each subunit binds pheophytin, quinone, additional chlorophylls, carotenoids and lipids. D1 provides most of the ligands for the Mn4-Ca-O5 cluster of the oxygen-evolving complex (OEC). There is also a Cl(-1) ion associated with D1 and D2, which is required for oxygen evolution. The PSII complex binds additional chlorophylls, carotenoids and specific lipids. is required as a cofactor. In terms of processing, tyr-161 forms a radical intermediate that is referred to as redox-active TyrZ, YZ or Y-Z. C-terminally processed by CTPA; processing is essential to allow assembly of the oxygen-evolving complex and thus photosynthetic growth.

It localises to the plastid. It is found in the chloroplast thylakoid membrane. It carries out the reaction 2 a plastoquinone + 4 hnu + 2 H2O = 2 a plastoquinol + O2. In terms of biological role, photosystem II (PSII) is a light-driven water:plastoquinone oxidoreductase that uses light energy to abstract electrons from H(2)O, generating O(2) and a proton gradient subsequently used for ATP formation. It consists of a core antenna complex that captures photons, and an electron transfer chain that converts photonic excitation into a charge separation. The D1/D2 (PsbA/PsbD) reaction center heterodimer binds P680, the primary electron donor of PSII as well as several subsequent electron acceptors. In Cyanidioschyzon merolae (strain NIES-3377 / 10D) (Unicellular red alga), this protein is Photosystem II protein D1.